Reading from the N-terminus, the 145-residue chain is Methylglyoxal synthase (145 aa).

Positions 1–145 (MNSKKKIALV…YYQKIRKDNF (145 aa)) constitute an MGS-like domain. Substrate contacts are provided by residues H12, K16, 38-41 (TGTT), and 58-59 (SG). The active-site Proton donor/acceptor is D64. Residue H91 participates in substrate binding.

Belongs to the methylglyoxal synthase family.

The enzyme catalyses dihydroxyacetone phosphate = methylglyoxal + phosphate. Catalyzes the formation of methylglyoxal from dihydroxyacetone phosphate. In Clostridium acetobutylicum (strain ATCC 824 / DSM 792 / JCM 1419 / IAM 19013 / LMG 5710 / NBRC 13948 / NRRL B-527 / VKM B-1787 / 2291 / W), this protein is Methylglyoxal synthase.